A 972-amino-acid polypeptide reads, in one-letter code: MNVMVSFNQLRNYFLESNSLRPSKWLFQSYGTSSSANILNGKLLARKLQRSVAEEVQALKAKDRNFKPALAIVQVGKREDSNVYVRMKEKAARLVGIDFKYCPFPETIQMPALLHELKKLNDDHTVHGVLVQLPLPKHLNERTVTESITPPKDVDGFGAFNIGLLAKNDATPIHYPCTPKGIMELLKDNKISVAGLNAVVLGRSDIVGNPISYLLRKDNATVTVCHSKTKDLIQHISNADLVIAALGKPEFVRGEWLKPGSVVVDVGINAVQRNGKRVLVGDVHFESASKVASSITPVPGGVGPMTVAMLMENIVNAAKIARTENIYRKIDLNPLELKKPVPSDIEIANSQEPKLISNLAKEMGIYDTELENYGNYKAKVNLAVYERLKHRKDGNYVVVSGITPTPFGEGKSTVVAGLVQAMGHLGKLGIACVRQPSQGPTFGVKGGAAGGGYAQFIPMDDFNLHMTGDIHAVTAANNLLVAALETRMFHENTQSDAALIKRLIPVKNGRRVIPRGLIGRWNRICASHNMDPEDVNNASPELLKEFVRLNVDPDTIECNRVLDVNDRFLRSIEVGKASTEKGHVRKTSFDISVASECMSILALSCDLNDMHSRLSRMVIANDKYGNAITAGDLGVSGALTVLLKDAIKPNLMQTLEGTPAFVHAGPFANISIGASSIIADKIALKLAGTESFDRPEDAGYVVTEAGFASDMGMEKFFNIKCRYSKLVPNTVVLVTTVKALKLHGGGPKLKPGAPIPEEYLVENLDLVKNGCSNMVKHIQNCHKFNIPVVVAINSYKTDSSKEHEIIREAALQAGAVDAVPSDHWAQGGKGAIELAKSVMTACDQSSNSKFRLLYDSETSIEDKVNVIAKEMYGANGVEFSSLAKERINTFIKQGFGNLPICMAKTQYSLSHNPEFRNVPKNFTVPIRDMRLNAGAGFIYPLAAEIQTIPGLPTAPAYLNIDICENGEIVGLS.

Residues 1–55 (MNVMVSFNQLRNYFLESNSLRPSKWLFQSYGTSSSANILNGKLLARKLQRSVAEE) constitute a mitochondrion transit peptide. Residues 56-340 (VQALKAKDRN…DLNPLELKKP (285 aa)) are methylenetetrahydrofolate dehydrogenase and cyclohydrolase. Substrate-binding positions include 84 to 88 (YVRMK) and 131 to 133 (VQL). NADP(+)-binding positions include 202–204 (GRS) and S227. 299–303 (PGGVG) is a binding site for substrate. Positions 341 to 972 (VPSDIEIANS…CENGEIVGLS (632 aa)) are formyltetrahydrofolate synthetase. An ATP-binding site is contributed by 405–412 (TPFGEGKS).

In the N-terminal section; belongs to the tetrahydrofolate dehydrogenase/cyclohydrolase family. The protein in the C-terminal section; belongs to the formate--tetrahydrofolate ligase family. As to quaternary structure, homodimer.

Its subcellular location is the mitochondrion. The catalysed reaction is (6R)-5,10-methylene-5,6,7,8-tetrahydrofolate + NADP(+) = (6R)-5,10-methenyltetrahydrofolate + NADPH. It carries out the reaction (6R)-5,10-methenyltetrahydrofolate + H2O = (6R)-10-formyltetrahydrofolate + H(+). It catalyses the reaction (6S)-5,6,7,8-tetrahydrofolate + formate + ATP = (6R)-10-formyltetrahydrofolate + ADP + phosphate. The protein operates within one-carbon metabolism; tetrahydrofolate interconversion. In terms of biological role, mitochondrial isozyme of C-1-tetrahydrofolate synthase. The trifunctional enzyme catalyzes the interconversion of the one-carbon derivatives of tetrahydrofolate (THF) between different oxidation states by the enzymatic activities 10-formyltetrahydrofolate synthetase, 5,lO-methenyltetrahydrofolate cyclohydrolase, and 5,lO-methylenetetrahydrofolate dehydrogenase. This is C-1-tetrahydrofolate synthase, mitochondrial (ade9) from Schizosaccharomyces pombe (strain 972 / ATCC 24843) (Fission yeast).